A 509-amino-acid chain; its full sequence is Coiled-coil domain-containing protein 181 (509 aa).

Disordered stretches follow at residues isoleucine 27–glutamate 122 and leucine 287–lysine 368. Basic and acidic residues-rich tracts occupy residues alanine 41 to glutamate 58 and aspartate 67 to aspartate 82. The span at arginine 319–cysteine 333 shows a compositional bias: polar residues. Coiled coils occupy residues serine 335–alanine 377 and leucine 418–glutamine 488. The span at arginine 337 to lysine 368 shows a compositional bias: basic and acidic residues.

The protein belongs to the CCDC181 family. In terms of assembly, homodimer. Interacts with HOOK1. Interacts with HOOK2. Interacts with HOOK3.

It is found in the cytoplasm. The protein resides in the cytoskeleton. It localises to the cell projection. Its subcellular location is the cilium. The protein localises to the flagellum. Functionally, microtubule-binding protein that localizes to the microtubular manchette of elongating spermatids. The sequence is that of Coiled-coil domain-containing protein 181 from Rattus norvegicus (Rat).